Reading from the N-terminus, the 600-residue chain is KIF-binding protein (600 aa).

The stretch at 384–434 forms a coiled coil; it reads KAENEATEYSKIMQDYAEAYEHIAFFEENPENQAKMQKRRAKYLEDLLDLL.

It belongs to the KIF-binding protein family.

It localises to the cytoplasm. The protein resides in the cytoskeleton. The protein is KIF-binding protein of Drosophila melanogaster (Fruit fly).